We begin with the raw amino-acid sequence, 124 residues long: MPTINQLIKKGRKSAAVKTKSPALQSCPQKRGVCTSVKTITPKKPNSALRKVARIRLSNGIEVTAYIPGIGHNLQEHSVVLVRGGRVKDLPGVRYHIIRGTKDALGVEDRKRGRSKYGAKRPKA.

A 3-methylthioaspartic acid modification is found at Asp-89. A disordered region spans residues 104-124 (ALGVEDRKRGRSKYGAKRPKA). Positions 112–124 (RGRSKYGAKRPKA) are enriched in basic residues.

Belongs to the universal ribosomal protein uS12 family. As to quaternary structure, part of the 30S ribosomal subunit. Contacts proteins S8 and S17. May interact with IF1 in the 30S initiation complex.

With S4 and S5 plays an important role in translational accuracy. Its function is as follows. Interacts with and stabilizes bases of the 16S rRNA that are involved in tRNA selection in the A site and with the mRNA backbone. Located at the interface of the 30S and 50S subunits, it traverses the body of the 30S subunit contacting proteins on the other side and probably holding the rRNA structure together. The combined cluster of proteins S8, S12 and S17 appears to hold together the shoulder and platform of the 30S subunit. The protein is Small ribosomal subunit protein uS12 of Treponema denticola (strain ATCC 35405 / DSM 14222 / CIP 103919 / JCM 8153 / KCTC 15104).